The sequence spans 149 residues: Small ribosomal subunit protein bS16 (149 aa).

The interval 115–149 is disordered; it reads KLKAAKSEADAKAKAEAEAAATEEAPAEEPAAEAE. The span at 119 to 131 shows a compositional bias: basic and acidic residues; sequence AKSEADAKAKAEA. Acidic residues predominate over residues 139-149; it reads APAEEPAAEAE.

Belongs to the bacterial ribosomal protein bS16 family.

This chain is Small ribosomal subunit protein bS16, found in Bifidobacterium adolescentis (strain ATCC 15703 / DSM 20083 / NCTC 11814 / E194a).